The sequence spans 184 residues: Large ribosomal subunit protein uL6 (184 aa).

The protein belongs to the universal ribosomal protein uL6 family. As to quaternary structure, part of the 50S ribosomal subunit.

In terms of biological role, this protein binds to the 23S rRNA, and is important in its secondary structure. It is located near the subunit interface in the base of the L7/L12 stalk, and near the tRNA binding site of the peptidyltransferase center. The chain is Large ribosomal subunit protein uL6 from Salinibacter ruber (strain DSM 13855 / M31).